The following is a 1053-amino-acid chain: Probable sucrose-phosphate synthase (1053 aa).

Positions 103-115 (RRQERERGRREAV) are enriched in basic and acidic residues. 2 disordered regions span residues 103 to 127 (RRQE…EGEK) and 673 to 693 (LRSI…DSLR).

This sequence belongs to the glycosyltransferase 1 family. As to quaternary structure, homodimer or homotetramer.

The enzyme catalyses beta-D-fructose 6-phosphate + UDP-alpha-D-glucose = sucrose 6(F)-phosphate + UDP + H(+). Its pathway is glycan biosynthesis; sucrose biosynthesis; sucrose from D-fructose 6-phosphate and UDP-alpha-D-glucose: step 1/2. Its activity is regulated as follows. Activity is regulated by phosphorylation and moderated by concentration of metabolites and light. In terms of biological role, plays a role in photosynthetic sucrose synthesis by catalyzing the rate-limiting step of sucrose biosynthesis from UDP-glucose and fructose- 6-phosphate. Involved in the regulation of carbon partitioning in the leaves of plants. May regulate the synthesis of sucrose and therefore play a major role as a limiting factor in the export of photoassimilates out of the leaf. Plays a role for sucrose availability that is essential for plant growth and fiber elongation. This chain is Probable sucrose-phosphate synthase (SPS), found in Solanum tuberosum (Potato).